A 366-amino-acid chain; its full sequence is Transmembrane protein 26 (366 aa).

3 helical membrane passes run 4-24 (LVLLKALVTRLLFLLHSLVAV), 36-56 (YWLLALLNLLLVLETVLTLKF), and 64-84 (WLSPAIFVYLVNIMPSLWLLE). Residue N110 is glycosylated (N-linked (GlcNAc...) asparagine). A run of 5 helical transmembrane segments spans residues 138 to 158 (MVCEPVWTLGLHQTLLLILII), 176 to 196 (ELLLMFVGTAADILEFTTETL), 208 to 228 (VSGILVVWTWSMLQFPLDLAV), 258 to 278 (IGLSFFIQDGPFLVVRLVLMI), and 282 to 302 (VINHMLVFFAVKNSLVMALHF). The span at 319–329 (HPESPKPEHSG) shows a compositional bias: basic and acidic residues. Residues 319-366 (HPESPKPEHSGPDQPSESGPSEWEDASPEALPLRTSPVTSEESYPTTP) form a disordered region. Over residues 354-366 (SPVTSEESYPTTP) the composition is skewed to polar residues.

It localises to the membrane. This chain is Transmembrane protein 26 (Tmem26), found in Mus musculus (Mouse).